An 87-amino-acid chain; its full sequence is MKTLLLTLVVVTIVCLDLGYTKTCLKTPSSTPQTCPQGQDICFLKVSCEQFCPIRGPVIEQGCAATCPEFRSNDRSLLCCTTDNCNH.

The N-terminal stretch at methionine 1–threonine 21 is a signal peptide. Disulfide bonds link cysteine 24–cysteine 42, cysteine 35–cysteine 63, cysteine 48–cysteine 52, cysteine 67–cysteine 79, and cysteine 80–cysteine 85.

Belongs to the three-finger toxin family. Long-chain subfamily. Kappa-neurotoxin sub-subfamily. In terms of assembly, homodimer and heterodimer with kappa 3-bungarotoxin; non-covalently linked. As to expression, expressed by the venom gland.

It localises to the secreted. Its function is as follows. Postsynaptic neurotoxin that binds and inhibits neuronal nicotinic acetylcholine receptors (nAChR) with high affinity (IC(50)&lt;100 nM). Is a selective, and slowly reversible antagonist of alpha-3/CHRNA3-containing and some alpha-4/CHRNA4-containing AChRs. This Bungarus multicinctus (Many-banded krait) protein is Kappa-2-bungarotoxin.